A 297-amino-acid polypeptide reads, in one-letter code: Homoserine kinase (297 aa).

Residue 79 to 89 participates in ATP binding; it reads PIARGLGSSGA.

It belongs to the GHMP kinase family. Homoserine kinase subfamily.

It is found in the cytoplasm. The catalysed reaction is L-homoserine + ATP = O-phospho-L-homoserine + ADP + H(+). The protein operates within amino-acid biosynthesis; L-threonine biosynthesis; L-threonine from L-aspartate: step 4/5. Its function is as follows. Catalyzes the ATP-dependent phosphorylation of L-homoserine to L-homoserine phosphate. In Pyrobaculum neutrophilum (strain DSM 2338 / JCM 9278 / NBRC 100436 / V24Sta) (Thermoproteus neutrophilus), this protein is Homoserine kinase.